We begin with the raw amino-acid sequence, 582 residues long: Inositol transporter 4 (582 aa).

Helical transmembrane passes span 35 to 55 (GIGG…LLFI), 70 to 90 (STIV…GGWI), 105 to 125 (VLFL…VIIV), 128 to 148 (IFVG…ISEA), 162 to 182 (GLLI…FVHT), 188 to 208 (WMLG…LSLP), 290 to 310 (FVGI…AGYA), 317 to 337 (ALSL…MMFV), 345 to 365 (LMII…TVFS), 456 to 476 (FGFL…PGMG), 494 to 514 (LGGG…SESF), and 525 to 545 (GTFL…WLLV).

This sequence belongs to the major facilitator superfamily. Sugar transporter (TC 2.A.1.1) family. In terms of tissue distribution, highly expressed in pollen and phloem companion cells.

It is found in the cell membrane. In terms of biological role, plasma membrane inositol-proton symporter. Mediates high-affinity myoinositol-proton symport across the plasma membrane. Active with myoinositol, scylloinositol and D-chiroinositol. Low activity with mucoinositol and alloinositol. The protein is Inositol transporter 4 (INT4) of Arabidopsis thaliana (Mouse-ear cress).